A 220-amino-acid polypeptide reads, in one-letter code: uncharacterized protein (220 aa).

This is an uncharacterized protein from Schizosaccharomyces pombe (strain 972 / ATCC 24843) (Fission yeast).